A 352-amino-acid polypeptide reads, in one-letter code: Chalcone synthase C (352 aa).

Residue C170 is part of the active site.

This sequence belongs to the thiolase-like superfamily. Chalcone/stilbene synthases family.

It carries out the reaction (E)-4-coumaroyl-CoA + 3 malonyl-CoA + 3 H(+) = 2',4,4',6'-tetrahydroxychalcone + 3 CO2 + 4 CoA. Its pathway is secondary metabolite biosynthesis; flavonoid biosynthesis. Functionally, the primary product of this enzyme is 4,2',4',6'-tetrahydroxychalcone (also termed naringenin-chalcone or chalcone) which can under specific conditions spontaneously isomerize into naringenin. This chain is Chalcone synthase C (CHSC), found in Ipomoea purpurea (Common morning glory).